A 199-amino-acid chain; its full sequence is Nucleoside triphosphate pyrophosphatase (199 aa).

Aspartate 76 (proton acceptor) is an active-site residue.

This sequence belongs to the Maf family. The cofactor is a divalent metal cation.

Its subcellular location is the cytoplasm. The catalysed reaction is a ribonucleoside 5'-triphosphate + H2O = a ribonucleoside 5'-phosphate + diphosphate + H(+). It catalyses the reaction a 2'-deoxyribonucleoside 5'-triphosphate + H2O = a 2'-deoxyribonucleoside 5'-phosphate + diphosphate + H(+). Its function is as follows. Nucleoside triphosphate pyrophosphatase. May have a dual role in cell division arrest and in preventing the incorporation of modified nucleotides into cellular nucleic acids. This Caulobacter vibrioides (strain ATCC 19089 / CIP 103742 / CB 15) (Caulobacter crescentus) protein is Nucleoside triphosphate pyrophosphatase.